Consider the following 356-residue polypeptide: Protein pelota homolog (356 aa).

Belongs to the eukaryotic release factor 1 family. Pelota subfamily. Monomer. A divalent metal cation is required as a cofactor.

Its subcellular location is the cytoplasm. Functionally, may function in recognizing stalled ribosomes, interact with stem-loop structures in stalled mRNA molecules, and effect endonucleolytic cleavage of the mRNA. May play a role in the release non-functional ribosomes and degradation of damaged mRNAs. Has endoribonuclease activity. The sequence is that of Protein pelota homolog from Pyrococcus furiosus (strain ATCC 43587 / DSM 3638 / JCM 8422 / Vc1).